A 611-amino-acid chain; its full sequence is CRS2-associated factor 2, chloroplastic (611 aa).

The transit peptide at 1-58 directs the protein to the chloroplast; sequence MPPPPPQRPASSHVGRANLFSASPPPLSNRRYPHHRSLPLPPVSPRRRDPKKHSQQPS. The disordered stretch occupies residues 1-72; it reads MPPPPPQRPA…TDSGPTRTVT (72 aa). Positions 55–72 are enriched in polar residues; sequence QQPSQEEPTDSGPTRTVT. CRM domains follow at residues 232–328 and 350–446; these read EPLT…TRPR and DGFT…YSKP. The interval 486–509 is CRS2 binding; it reads KMFKLWKSAVDSSLALLLDDAEAN. Residues 554 to 578 are disordered; it reads MNDEPETSVAGNEEGQLEQSPDLRD.

As to quaternary structure, interacts with CRS2 and RNA. Part of large ribonucleo-protein complexes that include group IIB introns, CRS2 and CAF2.

It localises to the plastid. Its subcellular location is the chloroplast stroma. Its function is as follows. Required for the splicing of group IIB introns in chloroplasts. Forms splicing particles with CRS2. Interacts with RNA and confers intron specificity of the splicing particles. In Zea mays (Maize), this protein is CRS2-associated factor 2, chloroplastic (CAF2).